The primary structure comprises 673 residues: DNA ligase (673 aa).

NAD(+)-binding positions include 32–36, 81–82, and E111; these read DHVYD and SL. K113 acts as the N6-AMP-lysine intermediate in catalysis. NAD(+) is bound by residues R134, E171, K286, and K310. C404, C407, C422, and C428 together coordinate Zn(2+). The region spanning 595–673 is the BRCT domain; it reads NIIDEYKNKT…NEFWKKDNNF (79 aa).

It belongs to the NAD-dependent DNA ligase family. LigA subfamily. It depends on Mg(2+) as a cofactor. Mn(2+) is required as a cofactor.

The enzyme catalyses NAD(+) + (deoxyribonucleotide)n-3'-hydroxyl + 5'-phospho-(deoxyribonucleotide)m = (deoxyribonucleotide)n+m + AMP + beta-nicotinamide D-nucleotide.. Functionally, DNA ligase that catalyzes the formation of phosphodiester linkages between 5'-phosphoryl and 3'-hydroxyl groups in double-stranded DNA using NAD as a coenzyme and as the energy source for the reaction. It is essential for DNA replication and repair of damaged DNA. The polypeptide is DNA ligase (Ureaplasma parvum serovar 3 (strain ATCC 27815 / 27 / NCTC 11736)).